Consider the following 150-residue polypeptide: Cilia- and flagella-associated protein 68 (150 aa).

Mn stretches follow at residues 99-110 (TTYDTSYNNKMP) and 140-150 (KSTYMNSYSKS).

Belongs to the CFAP68 family. Microtubule inner protein component of sperm flagellar doublet microtubules.

It localises to the cytoplasm. The protein resides in the cytoskeleton. Its subcellular location is the cilium axoneme. It is found in the flagellum axoneme. The protein localises to the nucleus. It localises to the cell projection. The protein resides in the cilium. Functionally, microtubule inner protein (MIP) part of the dynein-decorated doublet microtubules (DMTs) in cilia axoneme, which is required for motile cilia beating. This chain is Cilia- and flagella-associated protein 68 (CFAP68), found in Macaca fascicularis (Crab-eating macaque).